Here is a 217-residue protein sequence, read N- to C-terminus: MASLKSIIRQGKQTRSDLKQLRKSGKVPAVVYGYGTKNVSVKVDEVEFIKVIREVGRNGVIELGVGSKTIKVMVADYQFDPLKNQITHIDFLAINMSEERTVEVPVQLVGEAVGAKEGGVVEQPLFNLEVTATPDNIPEAIEVDITELNINDSLTVADVKVTGDFKIENDSAESVVTVVAPTEEPTEEEIEAMEGEQQTEEPEVVGESKEDEEKTEE.

The segment at valine 178–glutamate 217 is disordered. The segment covering glutamate 184–valine 205 has biased composition (acidic residues). Positions glycine 206 to glutamate 217 are enriched in basic and acidic residues.

The protein belongs to the bacterial ribosomal protein bL25 family. CTC subfamily. Part of the 50S ribosomal subunit; part of the 5S rRNA/L5/L18/L25 subcomplex. Contacts the 5S rRNA. Binds to the 5S rRNA independently of L5 and L18.

Its function is as follows. This is one of the proteins that binds to the 5S RNA in the ribosome where it forms part of the central protuberance. The chain is Large ribosomal subunit protein bL25 from Staphylococcus aureus (strain USA300).